Consider the following 132-residue polypeptide: Glycine-rich protein 3 (132 aa).

Residues 1–20 (MRYAVLLAVVLLLGAFTAEA) form the signal peptide.

As to expression, prismatic layer of shell (at protein level). Expressed primarily in the mantle with highest level in the mantle edge and lower level in the mantle pallium.

The protein localises to the secreted. The chain is Glycine-rich protein 3 from Pinctada maxima (Silver-lipped pearl oyster).